Here is a 308-residue protein sequence, read N- to C-terminus: uncharacterized protein (308 aa).

This is an uncharacterized protein from Acanthamoeba polyphaga (Amoeba).